The sequence spans 505 residues: Protein ERGIC-53-like (505 aa).

The signal sequence occupies residues 1–25 (MLEIRGLSPSLCLLSLLLVLHGAER). The Lumenal portion of the chain corresponds to 26-438 (SQPPPRRRFE…SGWLLGSSTC (413 aa)). One can recognise an L-type lectin-like domain in the interval 32-254 (RRFEYKLSFK…DVLSFLTFSL (223 aa)). Asn84 carries an N-linked (GlcNAc...) asparagine glycan. The cysteines at positions 177 and 216 are disulfide-linked. A helical membrane pass occupies residues 439-459 (LHTSIFLFFLLLQTVGFFCYV). Over 460 to 505 (NFSRQELDKRLQEYLSTGSLSLEPALPITRTIGVLRRQPISPSMQA) the chain is Cytoplasmic.

It localises to the endoplasmic reticulum-Golgi intermediate compartment membrane. The sequence is that of Protein ERGIC-53-like (Lman1l) from Mus musculus (Mouse).